Consider the following 2537-residue polypeptide: Histone-lysine N-methyltransferase SETD2 (2537 aa).

The span at 1–12 (MKPLPSQQPPPK) shows a compositional bias: pro residues. Disordered regions lie at residues 1–31 (MKPL…ENEA), 91–142 (TALS…ELGR), 156–483 (PQLA…RDLR), 510–554 (YTSK…STSR), and 607–629 (SERE…TFKK). Basic and acidic residues predominate over residues 18-31 (DPEHPTPEEEENEA). The segment covering 91–103 (TALSNEKQSDSPN) has biased composition (polar residues). At Ser132 the chain carries Phosphoserine. Over residues 156-166 (PQLAASTTAAS) the composition is skewed to low complexity. Pro residues predominate over residues 187–205 (PSSPPPPPPPPQASSPSPP). The residue at position 242 (Ser242) is a Phosphoserine. Residues 264-291 (LEEHTVQTLKEQADHLLQKEDSHIGKEE) show a composition bias toward basic and acidic residues. Phosphoserine is present on residues Ser322, Ser324, and Ser345. 4 stretches are compositionally biased toward basic and acidic residues: residues 336–401 (RSHD…ERDR), 422–433 (RSERSHYYDSER), 440–468 (PYRE…EYKK), and 510–528 (YTSK…ETIK). A Glycyl lysine isopeptide (Lys-Gly) (interchain with G-Cter in SUMO2) cross-link involves residue Lys360. At Ser423 the chain carries Phosphoserine. Residues Ser532, Ser614, and Ser624 each carry the phosphoserine modification. Residues 613 to 625 (GSPTPSNQLNDSP) show a composition bias toward polar residues. Phosphothreonine is present on Thr626. The residue at position 633 (Ser633) is a Phosphoserine. Lys637 participates in a covalent cross-link: Glycyl lysine isopeptide (Lys-Gly) (interchain with G-Cter in SUMO2). Phosphoserine occurs at positions 697, 707, 743, and 753. The disordered stretch occupies residues 729 to 749 (RDSDDTCRQHNTSKSPFREME). A Glycyl lysine isopeptide (Lys-Gly) (interchain with G-Cter in SUMO2) cross-link involves residue Lys775. Disordered stretches follow at residues 829–894 (CDNR…PTLD), 941–974 (QEAQ…HISD), 1015–1078 (EDYS…HYSD), and 1135–1185 (AHAQ…EDLP). Residues 830 to 847 (DNREPTDRHSENTCDEYK) show a composition bias toward basic and acidic residues. The span at 849-858 (SIGSTSSASH) shows a compositional bias: polar residues. Over residues 867 to 883 (PIGSSGISSLQSPPSGI) the composition is skewed to low complexity. Over residues 951-974 (LHERRGRPEIPLDEEQRGHTHISD) the composition is skewed to basic and acidic residues. Over residues 1026 to 1037 (DESDSEDTESDD) the composition is skewed to acidic residues. At Ser1077 the chain carries Phosphoserine. Residues 1150 to 1165 (SRSDHLGHLNPEDTLR) are compositionally biased toward basic and acidic residues. Ser1201 is subject to Phosphoserine. Disordered regions lie at residues 1232–1254 (GWDF…SYGT), 1280–1346 (WDPR…APEI), and 1366–1396 (NFEK…GELQ). Polar residues-rich tracts occupy residues 1235-1254 (FSQQ…SYGT) and 1319-1329 (RSGSHFSSPSN). A compositionally biased stretch (basic and acidic residues) spans 1366 to 1377 (NFEKNDIKERGP). Residues Ser1387, Ser1389, and Ser1391 each carry the phosphoserine modification. An interaction with TUBA1A region spans residues 1392-1688 (DGELQARKKV…KKERSRKKDS (297 aa)). Positions 1468-1522 (IKRMQCECTPLSKDERAQGEVACGEDCLNRLLMIECSSRCPNGDYCSNRRFQRKQ) constitute an AWS domain. Residues Cys1473, Cys1475, Cys1490, Cys1494, Cys1503, Cys1507, and Cys1513 each contribute to the Zn(2+) site. In terms of domain architecture, SET spans 1524-1641 (ADVEVILTEK…SGSELTFDYQ (118 aa)). S-adenosyl-L-methionine-binding positions include 1534 to 1536 (KGW), 1577 to 1579 (HYY), and 1602 to 1603 (NH). Cys1605 contributes to the Zn(2+) binding site. The region spanning 1648 to 1664 (EAQKCFCGSANCRGYLG) is the Post-SET domain. Residue Gln1650 coordinates S-adenosyl-L-methionine. Cys1652 is a binding site for Zn(2+). S-adenosyl-L-methionine is bound at residue Phe1653. Positions 1654 and 1659 each coordinate Zn(2+). Phosphoserine occurs at positions 1670, 1818, and 1819. Residues 1806–1848 (TAVPQLSEGDGYSSENTSRAHTPLNTPDPSAKPSTEMDTDTPK) form a disordered region. Polar residues predominate over residues 1818–1833 (SSENTSRAHTPLNTPD). A phosphothreonine mark is found at Thr1827 and Thr1846. 2 positions are modified to phosphoserine: Ser1862 and Ser1926. 2 disordered regions span residues 1914-1981 (SEAT…DISD) and 1993-2110 (LKEV…AQKQ). Positions 1934 to 1946 (TEPKDSNGTKLEE) are enriched in basic and acidic residues. Over residues 1947–1964 (TIAEETPSQDEEEGVSDV) the composition is skewed to acidic residues. Phosphoserine occurs at positions 1954, 1962, and 1969. Composition is skewed to basic and acidic residues over residues 1965–1978 (ESER…KTVD), 1993–2020 (LKEV…DAAA), and 2032–2045 (RSRE…SQNK). Phosphoserine is present on residues Ser2053 and Ser2055. 2 stretches are compositionally biased toward basic and acidic residues: residues 2063-2073 (RGTKRPDDRYD) and 2084-2108 (KDRN…REAQ). Residues 2090–2119 (STEERRKLFEQEVAQREAQKQQQQMQNLGM) adopt a coiled-coil conformation. The interval 2110-2339 (QQQQMQNLGM…APGQPQSLQP (230 aa)) is low charge region. In terms of domain architecture, WW spans 2362 to 2395 (IVLPPNWKTARDPEGKIYYYHVITRQTQWDPPTW). A disordered region spans residues 2412–2438 (LGTPTYDENPMKTSKKPKTAEADTSSE). An interaction with POLR2A region spans residues 2430-2537 (TAEADTSSEL…YKPKEDTELE (108 aa)).

Belongs to the class V-like SAM-binding methyltransferase superfamily. Histone-lysine methyltransferase family. SET2 subfamily. As to quaternary structure, specifically interacts with hyperphosphorylated C-terminal domain (CTD) of RNA polymerase II large subunit (POLR2A): binds to CTD heptad repeats doubly phosphorylated on 'Ser-2' and 'Ser-5' of each heptad. Interacts with HTT. Interacts with IWS1. Interacts with p53/TP53; leading to regulate p53/TP53 target genes. Component of a complex with HNRNPL. Interacts with TUBA1A; the interaction is independent on alpha-tubulin acetylation on 'Lys-40'. May be automethylated.

Its subcellular location is the nucleus. It localises to the chromosome. It carries out the reaction L-lysyl(36)-[histone H3] + 3 S-adenosyl-L-methionine = N(6),N(6),N(6)-trimethyl-L-lysyl(36)-[histone H3] + 3 S-adenosyl-L-homocysteine + 3 H(+). The catalysed reaction is L-lysyl-[protein] + S-adenosyl-L-methionine = N(6)-methyl-L-lysyl-[protein] + S-adenosyl-L-homocysteine + H(+). It catalyses the reaction L-lysyl-[protein] + 3 S-adenosyl-L-methionine = N(6),N(6),N(6)-trimethyl-L-lysyl-[protein] + 3 S-adenosyl-L-homocysteine + 3 H(+). Specifically inhibited by sinefungin derivatives. Functionally, histone methyltransferase that specifically trimethylates 'Lys-36' of histone H3 (H3K36me3) using dimethylated 'Lys-36' (H3K36me2) as substrate. It is capable of trimethylating unmethylated H3K36 (H3K36me0) in vitro. Represents the main enzyme generating H3K36me3, a specific tag for epigenetic transcriptional activation. Plays a role in chromatin structure modulation during elongation by coordinating recruitment of the FACT complex and by interacting with hyperphosphorylated POLR2A. Acts as a key regulator of DNA mismatch repair in G1 and early S phase by generating H3K36me3, a mark required to recruit MSH6 subunit of the MutS alpha complex: early recruitment of the MutS alpha complex to chromatin to be replicated allows a quick identification of mismatch DNA to initiate the mismatch repair reaction. Required for DNA double-strand break repair in response to DNA damage: acts by mediating formation of H3K36me3, promoting recruitment of RAD51 and DNA repair via homologous recombination (HR). Acts as a tumor suppressor. H3K36me3 also plays an essential role in the maintenance of a heterochromatic state, by recruiting DNA methyltransferase DNMT3A. H3K36me3 is also enhanced in intron-containing genes, suggesting that SETD2 recruitment is enhanced by splicing and that splicing is coupled to recruitment of elongating RNA polymerase. Required during angiogenesis. Required for endoderm development by promoting embryonic stem cell differentiation toward endoderm: acts by mediating formation of H3K36me3 in distal promoter regions of FGFR3, leading to regulate transcription initiation of FGFR3. In addition to histones, also mediates methylation of other proteins, such as tubulins and STAT1. Trimethylates 'Lys-40' of alpha-tubulins such as TUBA1B (alpha-TubK40me3); alpha-TubK40me3 is required for normal mitosis and cytokinesis and may be a specific tag in cytoskeletal remodeling. Involved in interferon-alpha-induced antiviral defense by mediating both monomethylation of STAT1 at 'Lys-525' and catalyzing H3K36me3 on promoters of some interferon-stimulated genes (ISGs) to activate gene transcription. The protein is Histone-lysine N-methyltransferase SETD2 of Mus musculus (Mouse).